Consider the following 319-residue polypeptide: Olfactory receptor 13F1 (319 aa).

The Extracellular portion of the chain corresponds to 1-25 (MFPANWTSVKVFFFLGFFHYPKVQV). Asparagine 5 is a glycosylation site (N-linked (GlcNAc...) asparagine). The chain crosses the membrane as a helical span at residues 26 to 46 (IIFAVCLLMYLITLLGNIFLI). The Cytoplasmic portion of the chain corresponds to 47-54 (SITILDSH). A helical transmembrane segment spans residues 55 to 75 (LHTPMYLFLSNLSFLDIWYSS). Residues 76–99 (SALSPMLANFVSGRNTISFSGCAT) lie on the Extracellular side of the membrane. An intrachain disulfide couples cysteine 97 to cysteine 189. A helical transmembrane segment spans residues 100 to 120 (QMYLSLAMGSTECVLLPMMAY). Residues 121-139 (DRYVAICNPLRYPVIMNRR) are Cytoplasmic-facing. The chain crosses the membrane as a helical span at residues 140 to 160 (TCVQIAAGSWMTGCLTAMVEM). At 161–197 (MSVLPLSLCGNSIINHFTCEILAILKLVCVDTSLVQL) the chain is on the extracellular side. The chain crosses the membrane as a helical span at residues 198 to 217 (IMLVISVLLLPMPMLLICIS). The Cytoplasmic segment spans residues 218–237 (YAFILASILRISSVEGRSKA). The chain crosses the membrane as a helical span at residues 238–258 (FSTCTAHLMVVVLFYGTALSM). Residues 259–271 (HLKPSAVDSQEID) are Extracellular-facing. A helical membrane pass occupies residues 272–292 (KFMALVYAGQTPMLNPIIYSL). Over 293–319 (RNKEVKVALKKLLIRNHFNTAFISILK) the chain is Cytoplasmic.

This sequence belongs to the G-protein coupled receptor 1 family.

Its subcellular location is the cell membrane. In terms of biological role, odorant receptor. The chain is Olfactory receptor 13F1 (OR13F1) from Homo sapiens (Human).